Reading from the N-terminus, the 307-residue chain is Protein rep (307 aa).

Residue Y219 coordinates DNA.

This sequence belongs to the Gram-positive plasmids replication protein type 1 family.

The sequence is that of Protein rep (repA) from Bacillus sp.